A 625-amino-acid polypeptide reads, in one-letter code: MDFKYDVIVIGAGHAGCEAAAAAANLGSKTCLITMDMNKVAQMSCNPAVGGIAKGQIVREIDALGGYMGLVTDQTAIQFRILNRSKGPAMWSPRAQCDRNKFIWAWREILENIPNLHIWQDTVKEIIVENGEVVGLKTFWDVTFHARCIVLTAGTFLNGLMHVGKTQLPGGRMAEPASYKLTESIAEHGIEYGRMKTGTPVRIDGRSVHYELMDTQDGECDFHKFSFMNTSVRHLKQLQCWTCFTNEEAHNVLRNGLADSPLFNGQIQSIGPRYCPSIETKIVTFPDKEQHQLFLEPEGETTQELYLNGFSSSLPMEIQIEALKKIPAFKDLVIYRPGYAIEYDYFDPTQLKHTLESKKIKNLFFAGQVNGTTGYEEAGGQGIIAGINAHINCHGGEPFTLARDEAYIGVLIDDLVTKGVDEPYRMFTSRAEYRILLRMDDADMRLTERAYKLGLVKEDRYALLKSKREAVENIVNFTRNYSIKAALINDALENLGTTPLRQGCKLIDLINRPQITIENISEYVPAFKRELDKITDERKEEILEAAEILIKYEGYIGRERIIADKLARLESIKIKGKFDYDSLQSLSTEARQKLKKIDPETIAQASRIPGVSPSDINVLLVLSGR.

Residues 11–16, V123, and S178 contribute to the FAD site; that span reads GAGHAG. 271 to 285 contributes to the NAD(+) binding site; it reads GPRYCPSIETKIVTF. FAD is bound at residue Q368.

Belongs to the MnmG family. As to quaternary structure, homodimer. Heterotetramer of two MnmE and two MnmG subunits. It depends on FAD as a cofactor.

The protein resides in the cytoplasm. Functionally, NAD-binding protein involved in the addition of a carboxymethylaminomethyl (cmnm) group at the wobble position (U34) of certain tRNAs, forming tRNA-cmnm(5)s(2)U34. This Bacteroides fragilis (strain ATCC 25285 / DSM 2151 / CCUG 4856 / JCM 11019 / LMG 10263 / NCTC 9343 / Onslow / VPI 2553 / EN-2) protein is tRNA uridine 5-carboxymethylaminomethyl modification enzyme MnmG.